The primary structure comprises 92 residues: Small ribosomal subunit protein uS19c (92 aa).

It belongs to the universal ribosomal protein uS19 family.

The protein resides in the plastid. The protein localises to the chloroplast. Functionally, protein S19 forms a complex with S13 that binds strongly to the 16S ribosomal RNA. The sequence is that of Small ribosomal subunit protein uS19c from Pinus koraiensis (Korean pine).